The chain runs to 367 residues: Chorismate synthase (367 aa).

Arginine 48 and arginine 54 together coordinate NADP(+). Residues 125-127, 238-239, glycine 278, 293-297, and arginine 319 contribute to the FMN site; these read RSS, NA, and KPTSS.

This sequence belongs to the chorismate synthase family. In terms of assembly, homotetramer. The cofactor is FMNH2.

It carries out the reaction 5-O-(1-carboxyvinyl)-3-phosphoshikimate = chorismate + phosphate. It participates in metabolic intermediate biosynthesis; chorismate biosynthesis; chorismate from D-erythrose 4-phosphate and phosphoenolpyruvate: step 7/7. In terms of biological role, catalyzes the anti-1,4-elimination of the C-3 phosphate and the C-6 proR hydrogen from 5-enolpyruvylshikimate-3-phosphate (EPSP) to yield chorismate, which is the branch point compound that serves as the starting substrate for the three terminal pathways of aromatic amino acid biosynthesis. This reaction introduces a second double bond into the aromatic ring system. The protein is Chorismate synthase of Stenotrophomonas maltophilia (strain R551-3).